The following is a 394-amino-acid chain: Elongation factor Tu 1 (394 aa).

One can recognise a tr-type G domain in the interval K10–Q204. The segment at G19–T26 is G1. G19 to T26 contributes to the GTP binding site. T26 contributes to the Mg(2+) binding site. The G2 stretch occupies residues G60–N64. Residues D81–G84 form a G3 region. GTP is bound by residues D81–H85 and N136–D139. A G4 region spans residues N136–D139. The G5 stretch occupies residues S174–L176.

The protein belongs to the TRAFAC class translation factor GTPase superfamily. Classic translation factor GTPase family. EF-Tu/EF-1A subfamily. In terms of assembly, monomer.

It localises to the cytoplasm. It catalyses the reaction GTP + H2O = GDP + phosphate + H(+). In terms of biological role, GTP hydrolase that promotes the GTP-dependent binding of aminoacyl-tRNA to the A-site of ribosomes during protein biosynthesis. The protein is Elongation factor Tu 1 of Shewanella baltica (strain OS195).